The primary structure comprises 659 residues: Homeobox protein slou (659 aa).

A compositionally biased stretch (polar residues) spans Met1 to Ala21. Disordered regions lie at residues Met1–Lys63, Met94–Ser152, Ala198–Ser298, Thr316–Arg349, Gln376–Ala440, and Pro455–Ala548. 3 stretches are compositionally biased toward low complexity: residues Ser27–Ser51, Ser95–Leu108, and His120–Thr135. The span at Arg136 to Ser152 shows a compositional bias: polar residues. The span at His201–Pro232 shows a compositional bias: basic residues. A run of 7 repeats spans residues His221–Pro222, His223–Pro224, His225–Pro226, His227–Pro228, His229–Pro230, His231–Pro232, and His233–Pro234. A 7 X 2 AA tandem repeats of H-P region spans residues His221–Pro234. Pro residues-rich tracts occupy residues Pro250–Ser263 and Pro275–Ser286. Composition is skewed to low complexity over residues Gln287–Ser298 and Thr316–Ser347. The segment covering Ser388–Asn401 has biased composition (acidic residues). A compositionally biased stretch (low complexity) spans Arg417 to Ser435. Composition is skewed to acidic residues over residues Arg478–Glu492 and Asn500–Ser519. Positions Ser528–Ser543 are enriched in gly residues. The segment at residues Pro545 to Asn604 is a DNA-binding region (homeobox).

It belongs to the NK-1 homeobox family. As to expression, mesodermal precursor cells of distinct muscles during embryogenesis, a subset of neuronal cells of the CNS and their precursors and also in cells of a small region of the midgut.

The protein resides in the nucleus. In terms of biological role, may play a role in specifying the identity of particular somatic muscles and neurons of the CNS. This chain is Homeobox protein slou (slou), found in Drosophila melanogaster (Fruit fly).